A 130-amino-acid polypeptide reads, in one-letter code: ATP synthase epsilon chain (130 aa).

It belongs to the ATPase epsilon chain family. F-type ATPases have 2 components, CF(1) - the catalytic core - and CF(0) - the membrane proton channel. CF(1) has five subunits: alpha(3), beta(3), gamma(1), delta(1), epsilon(1). CF(0) has three main subunits: a, b and c.

The protein resides in the cell membrane. In terms of biological role, produces ATP from ADP in the presence of a proton gradient across the membrane. This chain is ATP synthase epsilon chain, found in Nocardia farcinica (strain IFM 10152).